Reading from the N-terminus, the 471-residue chain is MSQNTGKITQVIGAVVDVEFEPGKLPEIYHALRVTNPAINDSENNLVLEVAQHLGENSVRTIAMDSTDGLKRGQAVLDTGKQICAPVGKKTLGRIINVIGEPVDEMGPIGNDKENPIHREAPPFEDQSTKVEAFTTGIKVVDLLAPYARGGKIGLFGGAGVGKTVLIMELINNIARQHGGFSVFAGVGERTREGNDLWMEMKETGVLEKTALVYGQMNEPPGARARVALTALSIAEHFRDDEGLDVLLFIDNIFRFTQAGSEVSALLGRIPSAVGYQPTLATEMGELQERITSTKNGSITSVQAIYVPADDLTDPAPATAFAHLDATTVLSRQIAELGIYPAVDPLDSTSRILDPQVIGEEHYAIARQVQYILQKYKDLQDIIAILGMDELSEEDKLIVARARKIQRFLSQPFFVAEVFTGSPGKYVELKDTIKGFQEIVSGKHDHLPEQAFYMVGSIEEAVEKAAKLAAV.

157 to 164 (GGAGVGKT) contributes to the ATP binding site.

The protein belongs to the ATPase alpha/beta chains family. F-type ATPases have 2 components, CF(1) - the catalytic core - and CF(0) - the membrane proton channel. CF(1) has five subunits: alpha(3), beta(3), gamma(1), delta(1), epsilon(1). CF(0) has three main subunits: a(1), b(2) and c(9-12). The alpha and beta chains form an alternating ring which encloses part of the gamma chain. CF(1) is attached to CF(0) by a central stalk formed by the gamma and epsilon chains, while a peripheral stalk is formed by the delta and b chains.

It localises to the cell inner membrane. The enzyme catalyses ATP + H2O + 4 H(+)(in) = ADP + phosphate + 5 H(+)(out). Its function is as follows. Produces ATP from ADP in the presence of a proton gradient across the membrane. The catalytic sites are hosted primarily by the beta subunits. The protein is ATP synthase subunit beta 1 of Pelobacter propionicus (strain DSM 2379 / NBRC 103807 / OttBd1).